The chain runs to 1265 residues: 1-phosphatidylinositol 4,5-bisphosphate phosphodiesterase gamma-2 (1265 aa).

The region spanning 20–131 (RALELGTVMT…WLSGLKILHQ (112 aa)) is the PH domain. The PI-PLC X-box domain occupies 312–456 (QDMNNPLSHY…LREKIIIKHK (145 aa)). Catalysis depends on residues His-327 and His-372. 2 SH2 domains span residues 532–635 (WFHK…TDPV) and 646–735 (WYYD…RYPV). Residues Tyr-753 and Tyr-759 each carry the phosphotyrosine; by BTK modification. Positions 769 to 829 (MPQRTVKALY…PSNYVEDIST (61 aa)) constitute an SH3 domain. In terms of domain architecture, PI-PLC Y-box spans 930–1044 (LSDLVVYCKP…GYVLQPESMR (115 aa)). Residues 1038-1169 (LQPESMRTEK…SGFRSVPLKN (132 aa)) form the C2 domain. Tyr-1197 carries the phosphotyrosine; by BTK modification. Phosphotyrosine is present on residues Tyr-1217 and Tyr-1245.

In terms of assembly, part of a complex composed of EEIG1, TNFRSF11A/RANK, PLCG2, GAB2, TEC and BTK; complex formation increases in the presence of TNFSF11/RANKL. Interacts (via SH2 domain) with CSF1R (tyrosine phosphorylated). Interacts constitutively with THEMIS2. Requires Ca(2+) as cofactor. Phosphorylated on tyrosine residues by CSF1R. Phosphorylated on tyrosine residues by BTK and SYK; upon ligand-induced activation of a variety of growth factor receptors and immune system receptors. Phosphorylation leads to increased phospholipase activity.

It localises to the membrane raft. The catalysed reaction is a 1,2-diacyl-sn-glycero-3-phospho-(1D-myo-inositol-4,5-bisphosphate) + H2O = 1D-myo-inositol 1,4,5-trisphosphate + a 1,2-diacyl-sn-glycerol + H(+). The production of the second messenger molecules diacylglycerol (DAG) and inositol 1,4,5-trisphosphate (IP3) is mediated by activated phosphatidylinositol-specific phospholipase C enzymes. It is a crucial enzyme in transmembrane signaling. The protein is 1-phosphatidylinositol 4,5-bisphosphate phosphodiesterase gamma-2 of Homo sapiens (Human).